A 227-amino-acid polypeptide reads, in one-letter code: Orotidine 5'-phosphate decarboxylase (227 aa).

Residues Asp8, Lys30, 57 to 66 (DLKFHDIPNT), Thr116, Arg177, Gln186, Gly206, and Arg207 each bind substrate. The Proton donor role is filled by Lys59.

This sequence belongs to the OMP decarboxylase family. Type 1 subfamily. As to quaternary structure, homodimer.

The catalysed reaction is orotidine 5'-phosphate + H(+) = UMP + CO2. It participates in pyrimidine metabolism; UMP biosynthesis via de novo pathway; UMP from orotate: step 2/2. Its function is as follows. Catalyzes the decarboxylation of orotidine 5'-monophosphate (OMP) to uridine 5'-monophosphate (UMP). The protein is Orotidine 5'-phosphate decarboxylase of Acinetobacter baumannii (strain AB307-0294).